The primary structure comprises 391 residues: Anhydro-N-acetylmuramic acid kinase (391 aa).

ATP is bound at residue 9–16; sequence GTSVDGID.

Belongs to the anhydro-N-acetylmuramic acid kinase family.

The enzyme catalyses 1,6-anhydro-N-acetyl-beta-muramate + ATP + H2O = N-acetyl-D-muramate 6-phosphate + ADP + H(+). It functions in the pathway amino-sugar metabolism; 1,6-anhydro-N-acetylmuramate degradation. It participates in cell wall biogenesis; peptidoglycan recycling. In terms of biological role, catalyzes the specific phosphorylation of 1,6-anhydro-N-acetylmuramic acid (anhMurNAc) with the simultaneous cleavage of the 1,6-anhydro ring, generating MurNAc-6-P. Is required for the utilization of anhMurNAc either imported from the medium or derived from its own cell wall murein, and thus plays a role in cell wall recycling. In Gloeothece citriformis (strain PCC 7424) (Cyanothece sp. (strain PCC 7424)), this protein is Anhydro-N-acetylmuramic acid kinase.